The primary structure comprises 151 residues: Large ribosomal subunit protein uL15 (151 aa).

The disordered stretch occupies residues 1–57 (MTLRLDSLKSNKGARRRKLRKGRGIAAGQGASCGFGMRGQKSRSGRPTRPGFEGGQM). The segment covering 12–23 (KGARRRKLRKGR) has biased composition (basic residues). Residues 25–37 (IAAGQGASCGFGM) are compositionally biased toward gly residues.

The protein belongs to the universal ribosomal protein uL15 family. In terms of assembly, part of the 50S ribosomal subunit.

Binds to the 23S rRNA. The chain is Large ribosomal subunit protein uL15 from Synechococcus sp. (strain CC9605).